The primary structure comprises 758 residues: Vitamin K-dependent gamma-carboxylase (758 aa).

The interval 1 to 34 (MAVSARPARAPRGPDKVKKDKAAQTSGPRQGSQM) is disordered. N-acetylalanine is present on A2. Topologically, residues 2 to 60 (AVSARPARAPRGPDKVKKDKAAQTSGPRQGSQMGKLLGFEWTDVSSWERLVTLLNRPTD) are cytoplasmic. A compositionally biased stretch (basic and acidic residues) spans 12 to 22 (RGPDKVKKDKA). A compositionally biased stretch (polar residues) spans 23-33 (AQTSGPRQGSQ). A helical transmembrane segment spans residues 61–81 (PASLAVFRFLFGLMMVLDIPQ). The Lumenal segment spans residues 82–113 (ERGLSSLDRRYLDGLEVCRFPLLDALQPLPLD). C99 and C450 are disulfide-bonded. A helical transmembrane segment spans residues 114–134 (WMYLVYTIMFLGALGMMLGLC). Residues 135–136 (YR) are Cytoplasmic-facing. The helical transmembrane segment at 137–157 (ISCVLFLLPYWYVFLLDKTSW) threads the bilayer. Residues 158 to 292 (NNHSYLYGLL…VSYFHCMNSQ (135 aa)) lie on the Lumenal side of the membrane. The chain crosses the membrane as a helical span at residues 293–313 (LFSIGMFPYVMLASSPLFCSP). The Cytoplasmic portion of the chain corresponds to 314 to 361 (EWPRKLVAHCPKKLQELLPLRTAPQPSTSCMYKRSRARGSQKPGLRHQ). A helical transmembrane segment spans residues 362–382 (LSTAFTLLYLLEQLFLPYSHF). Over 383-758 (LTQGYNNWTN…PDSHPVHSEF (376 aa)) the chain is Lumenal. The interval 726 to 758 (RPFEPAGEPSPVNTDSSNPNPPEPDSHPVHSEF) is disordered. The span at 749 to 758 (PDSHPVHSEF) shows a compositional bias: basic and acidic residues.

Belongs to the vitamin K-dependent gamma-carboxylase family. As to quaternary structure, monomer. May interact with CALU.

The protein localises to the endoplasmic reticulum membrane. It carries out the reaction 4-carboxy-L-glutamyl-[protein] + 2,3-epoxyphylloquinone + H2O + H(+) = phylloquinol + L-glutamyl-[protein] + CO2 + O2. Functionally, mediates the vitamin K-dependent carboxylation of glutamate residues to calcium-binding gamma-carboxyglutamate (Gla) residues with the concomitant conversion of the reduced hydroquinone form of vitamin K to vitamin K epoxide. Catalyzes gamma-carboxylation of various proteins, such as blood coagulation factors (F2, F7, F9 and F10), osteocalcin (BGLAP) or matrix Gla protein (MGP). The sequence is that of Vitamin K-dependent gamma-carboxylase (GGCX) from Ovis aries (Sheep).